We begin with the raw amino-acid sequence, 860 residues long: Leucine--tRNA ligase (860 aa).

Positions 73-83 (VLQPIGWDAFG) match the 'HIGH' region motif. Residues 650-654 (SPADM) carry the 'KMSKS' region motif. Asp-653 lines the ATP pocket.

It belongs to the class-I aminoacyl-tRNA synthetase family.

Its subcellular location is the cytoplasm. The enzyme catalyses tRNA(Leu) + L-leucine + ATP = L-leucyl-tRNA(Leu) + AMP + diphosphate. This chain is Leucine--tRNA ligase, found in Shigella flexneri.